The sequence spans 103 residues: Histone H4, major (103 aa).

A compositionally biased stretch (gly residues) spans 1 to 12; the sequence is MAGGKGGKGMGK. Residues 1–29 form a disordered region; that stretch reads MAGGKGGKGMGKVGAKRHSKRSNKASIEG. Lys-5, Lys-8, Lys-12, and Lys-16 each carry N6-acetyllysine. Over residues 14–23 the composition is skewed to basic residues; it reads GAKRHSKRSN. A DNA-binding region spans residues 16-21; sequence KRHSKR.

It belongs to the histone H4 family. As to quaternary structure, the nucleosome is a histone octamer containing two molecules each of H2A, H2B, H3 and H4 assembled in one H3-H4 heterotetramer and two H2A-H2B heterodimers. The octamer wraps approximately 147 bp of DNA.

The protein resides in the nucleus. It is found in the chromosome. In terms of biological role, core component of nucleosome. Nucleosomes wrap and compact DNA into chromatin, limiting DNA accessibility to the cellular machineries which require DNA as a template. Histones thereby play a central role in transcription regulation, DNA repair, DNA replication and chromosomal stability. DNA accessibility is regulated via a complex set of post-translational modifications of histones, also called histone code, and nucleosome remodeling. In Tetrahymena pyriformis, this protein is Histone H4, major.